The sequence spans 325 residues: Glutarate 2-hydroxylase (325 aa).

Fe cation is bound by residues H160, D162, and H292.

This sequence belongs to the glutarate hydroxylase family. In terms of assembly, homotetramer. Fe(2+) is required as a cofactor.

The enzyme catalyses glutarate + 2-oxoglutarate + O2 = (S)-2-hydroxyglutarate + succinate + CO2. It participates in amino-acid degradation. Acts as an alpha-ketoglutarate-dependent dioxygenase catalyzing hydroxylation of glutarate (GA) to L-2-hydroxyglutarate (L2HG). Functions in a L-lysine degradation pathway that proceeds via cadaverine, glutarate and L-2-hydroxyglutarate. The polypeptide is Glutarate 2-hydroxylase (Escherichia coli O157:H7).